We begin with the raw amino-acid sequence, 282 residues long: BURP domain-containing protein BNM2A (282 aa).

An N-terminal signal peptide occupies residues 1–26; sequence MASLRFSVTFPALLSLLLLSLWVVEA. The BURP domain maps to 60–282; the sequence is FFKISDLKLG…PLDNIVWVSK (223 aa).

In terms of tissue distribution, expressed in the radicle and cotyledon of germinating seeds 2 days post-imbibition (DPI), in stems and roots of 30-DPI young plants and in floral buds, but not in fully open flowers or leaves. Expressed in the embryo and seed coat tissues of developing seeds. The protein accumulates only in seeds and only long after transcript accumulation becomes evident.

The protein localises to the protein storage vacuole. The sequence is that of BURP domain-containing protein BNM2A from Brassica napus (Rape).